A 197-amino-acid chain; its full sequence is MTLDIVNWKAIIEALLYAAGDEGLTKKQLMSVLEVEEVALLDMMSAVKEEYQKQERGIELIEYADSYMLLTKKEYSIYLKKLVETPSKGLSQAALEVLAIVSYKQPITRSEVEEIRGVKSERVLHSLVAKALLCEVGRADGPGRAILYGTTPTFLEQFGLKALDELPPLPENVEADGVQEEADLFFENFNQTFEEIK.

This sequence belongs to the ScpB family. As to quaternary structure, homodimer. Homodimerization may be required to stabilize the binding of ScpA to the Smc head domains. Component of a cohesin-like complex composed of ScpA, ScpB and the Smc homodimer, in which ScpA and ScpB bind to the head domain of Smc. The presence of the three proteins is required for the association of the complex with DNA.

It is found in the cytoplasm. Participates in chromosomal partition during cell division. May act via the formation of a condensin-like complex containing Smc and ScpA that pull DNA away from mid-cell into both cell halves. The sequence is that of Segregation and condensation protein B from Bacillus pumilus (strain SAFR-032).